A 292-amino-acid chain; its full sequence is Cyclin-dependent kinase A-2 (292 aa).

A Protein kinase domain is found at 4-286 (YEKVEKIGEG…ARAALEHEYF (283 aa)). ATP contacts are provided by residues 10 to 18 (IGEGTYGVV) and Lys-33. Position 14 is a phosphothreonine (Thr-14). Tyr-15 carries the post-translational modification Phosphotyrosine. The active-site Proton acceptor is the Asp-126. Residue Thr-160 is modified to Phosphothreonine.

This sequence belongs to the protein kinase superfamily. CMGC Ser/Thr protein kinase family. CDC2/CDKX subfamily. In terms of tissue distribution, expressed in the dividing region of the root apex and in differentiated cells such as those in the sclerenchyma, pericycle and parenchyma of the central cylinder. Expressed in the intercalary meristem and the elongation zone of internodes.

It carries out the reaction L-seryl-[protein] + ATP = O-phospho-L-seryl-[protein] + ADP + H(+). The enzyme catalyses L-threonyl-[protein] + ATP = O-phospho-L-threonyl-[protein] + ADP + H(+). It catalyses the reaction [DNA-directed RNA polymerase] + ATP = phospho-[DNA-directed RNA polymerase] + ADP + H(+). This Oryza sativa subsp. japonica (Rice) protein is Cyclin-dependent kinase A-2 (CDKA-2).